Consider the following 499-residue polypeptide: Type-1 glutamine synthetase 1 (499 aa).

Residues 50 to 146 (PQLKFIRVCW…IFGEFFYLDN (97 aa)) enclose the GS beta-grasp domain. The GS catalytic domain maps to 158–499 (PRNSLQRAID…DQILKLLELF (342 aa)).

It belongs to the glutamine synthetase family.

The enzyme catalyses L-glutamate + NH4(+) + ATP = L-glutamine + ADP + phosphate + H(+). The sequence is that of Type-1 glutamine synthetase 1 (glnA1) from Dictyostelium discoideum (Social amoeba).